Reading from the N-terminus, the 313-residue chain is Formimidoylglutamase (313 aa).

Mn(2+)-binding residues include H130, D155, H157, D159, D241, and D243.

It belongs to the arginase family. The cofactor is Mn(2+).

It carries out the reaction N-formimidoyl-L-glutamate + H2O = formamide + L-glutamate. The protein operates within amino-acid degradation; L-histidine degradation into L-glutamate; L-glutamate from N-formimidoyl-L-glutamate (hydrolase route): step 1/1. In terms of biological role, catalyzes the conversion of N-formimidoyl-L-glutamate to L-glutamate and formamide. The chain is Formimidoylglutamase from Salmonella paratyphi B (strain ATCC BAA-1250 / SPB7).